The following is a 513-amino-acid chain: MEECKLDINKGKDAEILYEEYKYHEIKEMSFSSCARTSPELLKKFGCDAHVITSVEGAPKKENKKIWEFFKGSNKIKNLFTMFTCCFANDEEEIWGEETNESVVYKEYTYNSRWKIEIPSYPVREIPYVVADTPYNKLLCPLSSLEWVSKLILMDNANSIGMKNNRYSTNPFIYGMCYIIRNNANRILLESCYCENSTGMSTCPRILEFMPYEPLLKYNSYRLLSTYENSYKELSEMLTNNNAPLEVLIHHVMLYHYYPSFLQSALWTAVSSYLEERCNNGLYSKLLVKAAKQHFGDIRLYFVTPDDIYTFDHCNNWIAIVTRNFMAYIETKRKLEFDSIPFNCPLITQLFPLISSPKEMAWLLLIVCTDSNESWFPVHAYINTKTRILRPRSPKLDFFLKESDLLYFQDKQSISEFDIIRKDLLEDLIQCDSYVNTREQLRRRRETLNRKRITIAKLQNNHSQITFPYKRHNIHKSVDSIQFCKPASNLLTLKDNSYTQIPLEPLLLAEISV.

This sequence belongs to the UPF0300 family.

It is found in the golgi apparatus. The protein localises to the vacuole membrane. Its function is as follows. Has a role in meiosis. The chain is Meiotically up-regulated gene 133 protein (mug133) from Schizosaccharomyces pombe (strain 972 / ATCC 24843) (Fission yeast).